Here is a 151-residue protein sequence, read N- to C-terminus: Probable cGMP 3',5'-cyclic phosphodiesterase subunit delta (151 aa).

This sequence belongs to the PDE6D/unc-119 family. As to quaternary structure, interacts with Pde6.

It localises to the nucleus. Its subcellular location is the cytoplasm. The sequence is that of Probable cGMP 3',5'-cyclic phosphodiesterase subunit delta from Aedes aegypti (Yellowfever mosquito).